A 144-amino-acid polypeptide reads, in one-letter code: MRQKIFLFVRSLIILYLILFIGEGIAKLIPIGIPGSIFGLLILFIGLTTQIIKVDWVFFGASLLIRYMAVLFVPVSVGVMKYSDLLVSHASSLLIPNIVSTCVTLLVIGFLGDYLFSLNSFTRLRKKAIKKRDINNVNNKGEAS.

4 consecutive transmembrane segments (helical) span residues 5 to 25, 28 to 48, 57 to 77, and 92 to 112; these read IFLFVRSLIILYLILFIGEGI, LIPIGIPGSIFGLLILFIGLT, VFFGASLLIRYMAVLFVPVSV, and SLLIPNIVSTCVTLLVIGFLG.

The protein belongs to the UPF0299 family.

It is found in the cell inner membrane. The sequence is that of UPF0299 membrane protein MS1271 from Mannheimia succiniciproducens (strain KCTC 0769BP / MBEL55E).